Here is a 421-residue protein sequence, read N- to C-terminus: Cyclin-A1 (421 aa).

The disordered stretch occupies residues 1–20 (MRRHSSKSGVALPPVGQGPD).

The protein belongs to the cyclin family. Cyclin AB subfamily. As to quaternary structure, interacts with the CDK2 and the CDC2 protein kinases to form a serine/threonine kinase holoenzyme complex. The cyclin subunit imparts substrate specificity to the complex. Does not bind CDK4 and CDK5 (in vitro). The cyclin A1-CDK2 complex interacts with transcription factor E2F-1 and RB proteins. Found in a complex with CDK2, CABLES1 and CCNE1. Interacts with INCA1 and KLHDC9. In terms of processing, polyubiquitinated via 'Lys-11'-linked ubiquitin by the anaphase-promoting complex (APC/C), leading to its degradation by the proteasome. Deubiquitinated and stabilized by USP37 enables entry into S phase. Ubiquitinated during the G1 phase by the SCF(FBXO31) complex, leading to its proteasomal degradation.

The protein localises to the nucleus. In terms of biological role, may be involved in the control of the cell cycle at the G1/S (start) and G2/M (mitosis) transitions. May primarily function in the control of the germline meiotic cell cycle and additionally in the control of mitotic cell cycle in some somatic cells. The chain is Cyclin-A1 (Ccna1) from Rattus norvegicus (Rat).